Here is a 529-residue protein sequence, read N- to C-terminus: Endoglucanase 21 (529 aa).

Positions Met-1–Ala-24 are cleaved as a signal peptide. The Nucleophile role is filled by Asp-89. Asn-342 is a glycosylation site (N-linked (GlcNAc...) asparagine). Residues His-429, Asp-481, and Glu-490 contribute to the active site.

Belongs to the glycosyl hydrolase 9 (cellulase E) family. In terms of tissue distribution, expressed in roots and flowers.

It is found in the secreted. The enzyme catalyses Endohydrolysis of (1-&gt;4)-beta-D-glucosidic linkages in cellulose, lichenin and cereal beta-D-glucans.. The sequence is that of Endoglucanase 21 (GLU9) from Oryza sativa subsp. japonica (Rice).